The sequence spans 414 residues: MTTTTTTTALTFTLPDGTSTVTIRPTQKAAPSEEPSQDTAPSKKDSNHEVYLNDHLIATWVIDPSVKTRVSPAQVLDERAEFDSVRHLVLSSRRSNDNGHTWISIYALWLLHHDLDVIPISSPSNSAVTTYLINTGLAAPSPFEPADTDAGRTLLLAREAFWQGAGTPDNLSWLRSRPEASIPGFNSHLGAFASQMSFTRRGNVCTTHPLRPQKPAPGTVVYSRYIVEVGQHLQLVHIDASNPVHFSAYARWQNSDRVNHGWRERGPDEKHAAYLESQRIDPHTMSLIFLWDGEPAGYSEVGWAKEDNTACFVSSNCGIHIGEFDQLSHILVGEEKFRGGKRYQAVATSIKHLCFLRDPRTTQVIAEPRFDLPSVPIQARFLPQERKKRVQLPHKQAVLFALQRERFFQEGHFY.

Positions 16 to 25 are enriched in polar residues; the sequence is DGTSTVTIRP. Positions 16–47 are disordered; it reads DGTSTVTIRPTQKAAPSEEPSQDTAPSKKDSN. His329 is a substrate binding site. Catalysis depends on Glu367, which acts as the Proton acceptor.

This sequence belongs to the lysine N-acyltransferase mbtK family.

The protein operates within siderophore biosynthesis. In terms of biological role, acyltransferase; part of the gene cluster 14 that mediates the biosynthesis of a ferrichrome A-like siderophore which may contribute to organismal virulence. The first step of siderophore biosynthesis is performed by the HMG-CoA synthase (HMGS) MYCGRDRAFT_54740 which catalyzes the generation of HMG-CoA and CoA using acetoacetyl-CoA and acetyl-CoA as substrates. The enoyl-CoA isomerase/hydratase MYCGRDRAFT_76805 then catalyzes the conversion of HMG-CoA to methylglutaconyl-CoA. The acyltransferase MYCGRDRAFT_85486 then fuses methylglutaconyl-CoA with hydroxyornithine to yield methylglutaconyl hydroxyornithine. Methylglutaconyl hydroxyornithine is then available for use by the nonribosomal peptide synthetase NRPS2 to generate the ferrichrome A-like siderophore. The polypeptide is Acyltransferase MYCGRDRAFT_85486 (Zymoseptoria tritici (strain CBS 115943 / IPO323) (Speckled leaf blotch fungus)).